We begin with the raw amino-acid sequence, 509 residues long: CDK5RAP3 protein homolog (509 aa).

The protein belongs to the CDK5RAP3 family.

Its subcellular location is the nucleus. It is found in the cytoplasm. Substrate adapter of E3 ligase complexes mediating ufmylation, the covalent attachment of the ubiquitin-like modifier UFM1 to substrate proteins, and which is involved in various processes, such as ribosome recycling and reticulophagy (also called ER-phagy). The sequence is that of CDK5RAP3 protein homolog from Drosophila melanogaster (Fruit fly).